We begin with the raw amino-acid sequence, 61 residues long: Potassium channel toxin alpha-KTx 18.1 (61 aa).

The first 24 residues, 1–24 (MRFTGIILILISMTLIDSFFEMKV), serve as a signal peptide directing secretion. 3 disulfide bridges follow: Cys33-Cys52, Cys38-Cys57, and Cys42-Cys59.

In terms of tissue distribution, expressed by the venom gland.

It localises to the secreted. Its function is as follows. Reversible blocker of both Kv1.3/KCNA3 potassium channels (high affinity) and Shaker B (mammalian Kv1.1 analog) potassium channels (very low affinity). The chain is Potassium channel toxin alpha-KTx 18.1 from Tityus obscurus (Amazonian scorpion).